The sequence spans 280 residues: Chlorophyll a-b binding protein CP29 (280 aa).

The disordered stretch occupies residues 1-42 (MVFKFPTPPGTQKKAGTTATKPAPKATTKKVATSTGTRSGGV). Val2 carries the post-translational modification N-acetylvaline. Position 7 is a phosphothreonine; in State 1 and State 2 (Thr7). Positions 10–37 (GTQKKAGTTATKPAPKATTKKVATSTGT) are enriched in low complexity. Thr17 carries the post-translational modification Phosphothreonine; in State 2. Phosphothreonine; in State 1 and State 2 is present on Thr33. Tyr47 is a chlorophyll b binding site. The chlorophyll a site is built by Phe73 and Ser79. Ser103 is modified (phosphoserine; in State 2). Glu137 and His140 together coordinate chlorophyll a. The next 2 helical transmembrane spans lie at 143 to 163 (WAML…VSWV) and 176 to 196 (AGLS…ILVG). Chlorophyll b is bound by residues Ser183, Glu199, and Arg202. Positions 238, 241, 243, and 255 each coordinate chlorophyll a. The helical transmembrane segment at 244–264 (LAMVSFFGYGVQALSTGEGAL) threads the bilayer.

This sequence belongs to the light-harvesting chlorophyll a/b-binding (LHC) protein family. The LHC complex consists of chlorophyll a-b binding proteins. The cofactor is Binds at least 14 chlorophylls (8 Chl-a and 6 Chl-b) and carotenoids such as lutein and neoxanthin.. In terms of processing, reversible phosphorylation plays a role in the State transition process and determines the affinity of LHCII for PSI and PSII.

The protein resides in the plastid. Its subcellular location is the chloroplast thylakoid membrane. The light-harvesting complex (LHC) functions as a light receptor, it captures and delivers excitation energy to photosystems with which it is closely associated. CP29 facilitates the State 1 to State 2 transition, where State I is induced by excess photosystem I (PSI) light and State 2 is induced by excess photosystem II (PSII) light. The polypeptide is Chlorophyll a-b binding protein CP29 (Chlamydomonas reinhardtii (Chlamydomonas smithii)).